We begin with the raw amino-acid sequence, 455 residues long: Virion host shutoff protein (455 aa).

This sequence belongs to the herpesviridae VHS protein family.

It is found in the virion. Minor structural protein that acts as an endoribonuclease during lytic infection. Degrades host mRNAs in the cytoplasm by cutting them at preferred sites, including some in regions of translation initiation. The chain is Virion host shutoff protein (17) from Homo sapiens (Human).